We begin with the raw amino-acid sequence, 323 residues long: L-lactate dehydrogenase 1 (323 aa).

Residues Val-18, Asp-39, Tyr-69, and 83–84 (GA) each bind NAD(+). The substrate site is built by Gln-86 and Arg-92. Residues Ser-105, 122–124 (VAN), and Ser-147 each bind NAD(+). 124-127 (NPVD) lines the substrate pocket. Residue 152–155 (DTGR) participates in substrate binding. The active-site Proton acceptor is His-179. The residue at position 223 (Tyr-223) is a Phosphotyrosine. Thr-232 is a substrate binding site.

This sequence belongs to the LDH/MDH superfamily. LDH family. As to quaternary structure, homotetramer.

The protein resides in the cytoplasm. It carries out the reaction (S)-lactate + NAD(+) = pyruvate + NADH + H(+). Its pathway is fermentation; pyruvate fermentation to lactate; (S)-lactate from pyruvate: step 1/1. Functionally, catalyzes the conversion of lactate to pyruvate. This is L-lactate dehydrogenase 1 from Lactobacillus acidophilus (strain ATCC 700396 / NCK56 / N2 / NCFM).